The chain runs to 294 residues: N-acetylmuramic acid 6-phosphate etherase (294 aa).

The SIS domain occupies 54–217 (VIKSFEEEGR…STASMIGVGK (164 aa)). Glu82 acts as the Proton donor in catalysis. Glu113 is a catalytic residue.

The protein belongs to the GCKR-like family. MurNAc-6-P etherase subfamily. Homodimer.

It carries out the reaction N-acetyl-D-muramate 6-phosphate + H2O = N-acetyl-D-glucosamine 6-phosphate + (R)-lactate. Its pathway is amino-sugar metabolism; N-acetylmuramate degradation. In terms of biological role, specifically catalyzes the cleavage of the D-lactyl ether substituent of MurNAc 6-phosphate, producing GlcNAc 6-phosphate and D-lactate. This chain is N-acetylmuramic acid 6-phosphate etherase, found in Bacillus cereus (strain AH187).